We begin with the raw amino-acid sequence, 332 residues long: Long form salivary protein D7L2 (332 aa).

An N-terminal signal peptide occupies residues 1-21; that stretch reads MFPPRKFLLSSFILAALHVTA. Intrachain disulfides connect Cys40-Cys77 and Cys73-Cys133. Leukotriene E4 is bound at residue Trp61. Leukotriene E4 is bound by residues Gly157 and Lys176. Cystine bridges form between Cys184–Cys219, Cys200–Cys331, and Cys259–Cys278. The noradrenaline site is built by Glu185, Arg203, and His216. Noradrenaline is bound by residues Asp294 and Glu297.

It belongs to the PBP/GOBP family. In terms of assembly, interacts with human CD4. In terms of tissue distribution, saliva (at protein level). Female salivary gland (at protein level). Detected in the head and thorax of the female mosquitoes, where the salivary glands are located.

Its subcellular location is the secreted. Functionally, modulates blood feeding of female mosquitoes on vertebrate species by binding and sequestering different mediators involved in the host response, such as biogenic amines and eicosanoids. Binds serotonin, histamine, tryptamine, noradrenaline, leukotriene B4, leukotriene C4, leukotriene D4, leukotriene E4 and U-46619, a stable analog of thromboxane A2. Does not bind adrenaline. Exhibits vasodilating activity. Inhibits agonist-induced platelet aggregation but not blood clotting. Its function is as follows. (Microbial infection) Probably promotes Plasmodium gallinaceum oocyst development in mosquito midgut. The sequence is that of Long form salivary protein D7L2 from Aedes aegypti (Yellowfever mosquito).